A 523-amino-acid chain; its full sequence is 2,3-bisphosphoglycerate-independent phosphoglycerate mutase (523 aa).

2 residues coordinate Mn(2+): Asp13 and Ser63. The Phosphoserine intermediate role is filled by Ser63. Substrate-binding positions include His124, 156–157 (RD), Arg188, Arg194, 268–271 (RSDR), and Lys341. Residues Asp408, His412, Asp449, His450, and His467 each contribute to the Mn(2+) site.

This sequence belongs to the BPG-independent phosphoglycerate mutase family. In terms of assembly, monomer. Mn(2+) serves as cofactor.

The enzyme catalyses (2R)-2-phosphoglycerate = (2R)-3-phosphoglycerate. The protein operates within carbohydrate degradation; glycolysis; pyruvate from D-glyceraldehyde 3-phosphate: step 3/5. Catalyzes the interconversion of 2-phosphoglycerate and 3-phosphoglycerate. The polypeptide is 2,3-bisphosphoglycerate-independent phosphoglycerate mutase (Salinibacter ruber (strain DSM 13855 / M31)).